We begin with the raw amino-acid sequence, 156 residues long: SsrA-binding protein (156 aa).

It belongs to the SmpB family.

Its subcellular location is the cytoplasm. In terms of biological role, required for rescue of stalled ribosomes mediated by trans-translation. Binds to transfer-messenger RNA (tmRNA), required for stable association of tmRNA with ribosomes. tmRNA and SmpB together mimic tRNA shape, replacing the anticodon stem-loop with SmpB. tmRNA is encoded by the ssrA gene; the 2 termini fold to resemble tRNA(Ala) and it encodes a 'tag peptide', a short internal open reading frame. During trans-translation Ala-aminoacylated tmRNA acts like a tRNA, entering the A-site of stalled ribosomes, displacing the stalled mRNA. The ribosome then switches to translate the ORF on the tmRNA; the nascent peptide is terminated with the 'tag peptide' encoded by the tmRNA and targeted for degradation. The ribosome is freed to recommence translation, which seems to be the essential function of trans-translation. Required for trans-translation. Probably required for sporulation; deletion of the gene for tmRNA impairs sporulation via its effect on trans-translation, and as smpB is required for trans-translation under non-stress conditions, it is also probably required during sporulation. The polypeptide is SsrA-binding protein (Bacillus subtilis (strain 168)).